The following is a 717-amino-acid chain: METVDSTRAFVKNVKRLIVKVGTAVVTRADGRLALGRLGALCEQLQELNSQGYEVILVTSGAVGVGRQRLRYRKLLNSSFLDLQKPQTELDGKACAAVGQNGLMALYDSLFSQLDVTSAQLLVTDNDFRDPDFRRQLNDTVNSLLSLKVIPIFNENDAISTRRAPYEDSSGIFWDNDSLAALLALELKADLLVLLSDVDGLYSGPPRDPDSKLIYTYIKEIHERVITFGDKSRVGRGGMTAKVKAAMYAAYAGIPVVITSGFATDNIIKVLHGERIGTLFHCDANKWASIGETDAREMAVAARACSRRLQALSSQERSKILQDIADALEANEKAILAENEADVVAAQQAGYEKSLISRLALNPGKISSLANSVRVLSNMDEPLGHTLKRTEIADGFILEKSSSPLGVVLIIFESRPDALVQIASLAVRSGNGLMLKGGKEAKRSNAILHKVITSAIPVSVGERLIGLVTSREEIPELLKLDDVIDLVIPRGSNKLVSQIKASTKIPVLGHADGICHVYVDKSADMDMAKRITVDAKIDYPAACNAMETLLVHKDLAQNGGLNDLIVELQTKGVSLYGGPKASSLLMIPEARTFRHEYSSLACTVEVVEDVYAAIDHIHQHGSAHTDSIITEDQEVAEVFLRQVDSAAVFHNASTRFSDGFRFGLGAEVGISTGRIHARGPVGVEGLLTTKWLARGSGQIVDGDKSIVYSHKDLTQQG.

The interval 1–296 (METVDSTRAF…WASIGETDAR (296 aa)) is glutamate 5-kinase. Positions 60, 157, and 176 each coordinate substrate. ATP contacts are provided by residues 196-197 (SD) and 236-242 (RGGMTAK). Residues 297–717 (EMAVAARACS…YSHKDLTQQG (421 aa)) form a gamma-glutamyl phosphate reductase region.

In the N-terminal section; belongs to the glutamate 5-kinase family. This sequence in the C-terminal section; belongs to the gamma-glutamyl phosphate reductase family. In terms of tissue distribution, expressed at high levels in leaves and is inducible in roots subjected to salt stress.

The catalysed reaction is L-glutamate + ATP = L-glutamyl 5-phosphate + ADP. The enzyme catalyses L-glutamate 5-semialdehyde + phosphate + NADP(+) = L-glutamyl 5-phosphate + NADPH + H(+). It participates in amino-acid biosynthesis; L-proline biosynthesis; L-glutamate 5-semialdehyde from L-glutamate: step 1/2. It functions in the pathway amino-acid biosynthesis; L-proline biosynthesis; L-glutamate 5-semialdehyde from L-glutamate: step 2/2. With respect to regulation, feedback regulated by proline. In terms of biological role, P5CS plays a key role in proline biosynthesis, leading to osmoregulation in plants. The protein is Delta-1-pyrroline-5-carboxylate synthase (PRO2) of Solanum lycopersicum (Tomato).